Reading from the N-terminus, the 98-residue chain is NADH-ubiquinone oxidoreductase chain 4L (98 aa).

The next 3 helical transmembrane spans lie at threonine 2–phenylalanine 22, leucine 26–threonine 46, and isoleucine 59–valine 79.

Belongs to the complex I subunit 4L family. In terms of assembly, core subunit of respiratory chain NADH dehydrogenase (Complex I) which is composed of 45 different subunits.

The protein localises to the mitochondrion inner membrane. It catalyses the reaction a ubiquinone + NADH + 5 H(+)(in) = a ubiquinol + NAD(+) + 4 H(+)(out). Its function is as follows. Core subunit of the mitochondrial membrane respiratory chain NADH dehydrogenase (Complex I) which catalyzes electron transfer from NADH through the respiratory chain, using ubiquinone as an electron acceptor. Part of the enzyme membrane arm which is embedded in the lipid bilayer and involved in proton translocation. The protein is NADH-ubiquinone oxidoreductase chain 4L of Rattus norvegicus (Rat).